We begin with the raw amino-acid sequence, 128 residues long: Fluoride-specific ion channel FluC (128 aa).

The next 4 helical transmembrane spans lie at 4–24, 37–57, 63–83, and 99–119; these read LILAIIVGCGGFIGAALRYLI, PYGTLIVNIVGAIIIGFIMDI, LISGHTKLFLTTGMMGGLTTF, and ILMGCTNAALNLGLSLVGVII. Na(+) contacts are provided by Gly78 and Thr81.

It belongs to the fluoride channel Fluc/FEX (TC 1.A.43) family.

The protein localises to the cell membrane. It catalyses the reaction fluoride(in) = fluoride(out). Its activity is regulated as follows. Na(+) is not transported, but it plays an essential structural role and its presence is essential for fluoride channel function. Fluoride-specific ion channel. Important for reducing fluoride concentration in the cell, thus reducing its toxicity. This chain is Fluoride-specific ion channel FluC, found in Clostridium novyi (strain NT).